The sequence spans 350 residues: Hydroxymethylglutaryl-CoA synthase (350 aa).

The Proton donor/acceptor role is filled by E83. C115 functions as the Acyl-thioester intermediate in the catalytic mechanism. (3S)-3-hydroxy-3-methylglutaryl-CoA-binding residues include C115 and T156. R204 is a binding site for CoA. (3S)-3-hydroxy-3-methylglutaryl-CoA is bound by residues T206 and H239. H239 serves as the catalytic Proton donor/acceptor. K244 contacts CoA. (3S)-3-hydroxy-3-methylglutaryl-CoA is bound by residues N271 and S301.

Belongs to the thiolase-like superfamily. Archaeal HMG-CoA synthase family. Interacts with acetoacetyl-CoA thiolase that catalyzes the precedent step in the pathway and with a DUF35 protein. The acetoacetyl-CoA thiolase/HMG-CoA synthase complex channels the intermediate via a fused CoA-binding site, which allows for efficient coupling of the endergonic thiolase reaction with the exergonic HMGCS reaction.

The enzyme catalyses acetoacetyl-CoA + acetyl-CoA + H2O = (3S)-3-hydroxy-3-methylglutaryl-CoA + CoA + H(+). The protein operates within metabolic intermediate biosynthesis; (R)-mevalonate biosynthesis; (R)-mevalonate from acetyl-CoA: step 2/3. Catalyzes the condensation of acetyl-CoA with acetoacetyl-CoA to form 3-hydroxy-3-methylglutaryl-CoA (HMG-CoA). Functions in the mevalonate (MVA) pathway leading to isopentenyl diphosphate (IPP), a key precursor for the biosynthesis of isoprenoid compounds that are building blocks of archaeal membrane lipids. The polypeptide is Hydroxymethylglutaryl-CoA synthase (Thermococcus onnurineus (strain NA1)).